A 250-amino-acid chain; its full sequence is 2,3-bisphosphoglycerate-dependent phosphoglycerate mutase (250 aa).

Substrate-binding positions include Arg10–Asn17, Thr23–Gly24, Arg62, Glu89–Tyr92, Lys100, Arg116–Arg117, and Gly185–Asn186. His11 functions as the Tele-phosphohistidine intermediate in the catalytic mechanism. Catalysis depends on Glu89, which acts as the Proton donor/acceptor.

Belongs to the phosphoglycerate mutase family. BPG-dependent PGAM subfamily. Homodimer.

It catalyses the reaction (2R)-2-phosphoglycerate = (2R)-3-phosphoglycerate. Its pathway is carbohydrate degradation; glycolysis; pyruvate from D-glyceraldehyde 3-phosphate: step 3/5. Catalyzes the interconversion of 2-phosphoglycerate and 3-phosphoglycerate. The chain is 2,3-bisphosphoglycerate-dependent phosphoglycerate mutase from Citrobacter koseri (strain ATCC BAA-895 / CDC 4225-83 / SGSC4696).